The following is a 449-amino-acid chain: UDP-N-acetylmuramoylalanine--D-glutamate ligase (449 aa).

Position 111-117 (111-117 (GTNGKST)) interacts with ATP.

This sequence belongs to the MurCDEF family.

It localises to the cytoplasm. It carries out the reaction UDP-N-acetyl-alpha-D-muramoyl-L-alanine + D-glutamate + ATP = UDP-N-acetyl-alpha-D-muramoyl-L-alanyl-D-glutamate + ADP + phosphate + H(+). It functions in the pathway cell wall biogenesis; peptidoglycan biosynthesis. In terms of biological role, cell wall formation. Catalyzes the addition of glutamate to the nucleotide precursor UDP-N-acetylmuramoyl-L-alanine (UMA). This Rickettsia felis (strain ATCC VR-1525 / URRWXCal2) (Rickettsia azadi) protein is UDP-N-acetylmuramoylalanine--D-glutamate ligase.